A 514-amino-acid polypeptide reads, in one-letter code: 2'-5'-oligoadenylate synthase-like protein (514 aa).

A2 carries the post-translational modification N-acetylalanine. 2 consecutive Ubiquitin-like domains span residues 354 to 433 (IHLT…IPSE) and 434 to 509 (IQVF…KGEA).

This sequence belongs to the 2-5A synthase family. In terms of assembly, specifically interacts with the ligand binding domain of the thyroid receptor (TR). TRIP14 does not require the presence of thyroid hormone for its interaction. Binds MBD1. In terms of tissue distribution, expressed in most tissues, with the highest levels in primary blood Leukocytes and other hematopoietic system tissues, colon, stomach and to some extent in testis.

The protein resides in the nucleus. It is found in the nucleolus. The protein localises to the cytoplasm. Does not have 2'-5'-OAS activity, but can bind double-stranded RNA. Displays antiviral activity against encephalomyocarditis virus (EMCV) and hepatitis C virus (HCV) via an alternative antiviral pathway independent of RNase L. In Homo sapiens (Human), this protein is 2'-5'-oligoadenylate synthase-like protein (OASL).